A 397-amino-acid chain; its full sequence is Acetate kinase (397 aa).

Asn7 is a Mg(2+) binding site. Residue Lys14 coordinates ATP. Substrate is bound at residue Arg91. Asp148 functions as the Proton donor/acceptor in the catalytic mechanism. Residues 208-212, 283-285, and 331-335 contribute to the ATP site; these read HIGNG, DMR, and GVGEN. Glu384 is a Mg(2+) binding site.

It belongs to the acetokinase family. Homodimer. It depends on Mg(2+) as a cofactor. Mn(2+) is required as a cofactor.

It is found in the cytoplasm. It carries out the reaction acetate + ATP = acetyl phosphate + ADP. It functions in the pathway metabolic intermediate biosynthesis; acetyl-CoA biosynthesis; acetyl-CoA from acetate: step 1/2. Its function is as follows. Catalyzes the formation of acetyl phosphate from acetate and ATP. Can also catalyze the reverse reaction. In Azobacteroides pseudotrichonymphae genomovar. CFP2, this protein is Acetate kinase.